Reading from the N-terminus, the 243-residue chain is MSPLKQFEIFPLIRLPEFFGWDINFTNSSLYMVLTVVFASLFLFAGVFRGKVIPGPMQSFVEIVCSFVLGIIKGSCGKAGSDYFPLILSVFLYVLFANLVGMLPLPMSFTVTSHIVVTLALAMVVFIFVTLIGLKKQGMGFFAMFLPDGTPNWIAPLMIFLEVCTYLFRPISLAIRLTANMIAGHTILKVIAGFVYPTSLLISPLSFLFVVVLIVFEVFIAMLQAYIFVMLTCVYLNDSLFKH.

The next 8 membrane-spanning stretches (helical) occupy residues 28–48, 52–72, 83–103, 114–134, 141–161, 177–197, 200–220, and 221–241; these read SSLYMVLTVVFASLFLFAGVF, VIPGPMQSFVEIVCSFVLGII, YFPLILSVFLYVLFANLVGML, HIVVTLALAMVVFIFVTLIGL, FFAMFLPDGTPNWIAPLMIFL, LTANMIAGHTILKVIAGFVYP, LLISPLSFLFVVVLIVFEVFI, and AMLQAYIFVMLTCVYLNDSLF.

It belongs to the ATPase A chain family. As to quaternary structure, F-type ATPases have 2 components, CF(1) - the catalytic core - and CF(0) - the membrane proton channel. CF(1) has five subunits: alpha(3), beta(3), gamma(1), delta(1), epsilon(1). CF(0) has three main subunits: a(1), b(2) and c(9-12). The alpha and beta chains form an alternating ring which encloses part of the gamma chain. CF(1) is attached to CF(0) by a central stalk formed by the gamma and epsilon chains, while a peripheral stalk is formed by the delta and b chains.

The protein resides in the cell inner membrane. Its function is as follows. Key component of the proton channel; it plays a direct role in the translocation of protons across the membrane. The chain is ATP synthase subunit a from Neorickettsia sennetsu (strain ATCC VR-367 / Miyayama) (Ehrlichia sennetsu).